The following is a 777-amino-acid chain: 5-methyltetrahydropteroyltriglutamate--homocysteine methyltransferase (777 aa).

Residues 17-20 (RELK) and Lys132 contribute to the 5-methyltetrahydropteroyltri-L-glutamate site. L-homocysteine is bound by residues 455–457 (IGS) and Glu508. L-methionine is bound by residues 455 to 457 (IGS) and Glu508. 5-methyltetrahydropteroyltri-L-glutamate is bound by residues 539–540 (RC) and Trp585. An L-homocysteine-binding site is contributed by Asp623. Residue Asp623 participates in L-methionine binding. Glu629 contributes to the 5-methyltetrahydropteroyltri-L-glutamate binding site. Zn(2+) contacts are provided by His665, Cys667, and Glu689. Residue His718 is the Proton donor of the active site. Cys750 lines the Zn(2+) pocket.

This sequence belongs to the vitamin-B12 independent methionine synthase family. The cofactor is Zn(2+).

The catalysed reaction is 5-methyltetrahydropteroyltri-L-glutamate + L-homocysteine = tetrahydropteroyltri-L-glutamate + L-methionine. The protein operates within amino-acid biosynthesis; L-methionine biosynthesis via de novo pathway; L-methionine from L-homocysteine (MetE route): step 1/1. Its function is as follows. Catalyzes the transfer of a methyl group from 5-methyltetrahydrofolate to homocysteine resulting in methionine formation. The chain is 5-methyltetrahydropteroyltriglutamate--homocysteine methyltransferase from Caulobacter vibrioides (strain ATCC 19089 / CIP 103742 / CB 15) (Caulobacter crescentus).